The primary structure comprises 443 residues: KH domain-containing, RNA-binding, signal transduction-associated protein 1 (443 aa).

The interval 1-96 is disordered; that stretch reads MQRRDDPAAR…LPPSATASVK (96 aa). Positions 10–21 are enriched in low complexity; it reads RMSRSSGRSGSM. Phosphoserine is present on residues Ser-18, Ser-20, and Ser-29. Thr-33 bears the Phosphothreonine mark. Arg-45 carries the post-translational modification Asymmetric dimethylarginine; by PRMT1. Residue Arg-52 is modified to Asymmetric dimethylarginine; partial; by PRMT1. Ser-58 is modified (phosphoserine). Thr-84 is modified (phosphothreonine; by MAPK1). Glycyl lysine isopeptide (Lys-Gly) (interchain with G-Cter in SUMO2) cross-links involve residues Lys-96 and Lys-102. The segment at 100–260 is involved in homodimerization; sequence ENKYLPELMA…VKKFLVPDMM (161 aa). The residue at position 113 (Ser-113) is a Phosphoserine. A Glycyl lysine isopeptide (Lys-Gly) (interchain with G-Cter in SUMO2) cross-link involves residue Lys-139. The residue at position 150 (Ser-150) is a Phosphoserine. The region spanning 171 to 197 is the KH domain; that stretch reads NFVGKILGPQGNTIKRLQEETGAKISV. Position 175 is an N6-acetyllysine; alternate (Lys-175). A Glycyl lysine isopeptide (Lys-Gly) (interchain with G-Cter in SUMO2); alternate cross-link involves residue Lys-175. Position 183 is a phosphothreonine (Thr-183). The span at 280-293 shows a compositional bias: low complexity; it reads PSRGRGVPVRGRGA. The disordered stretch occupies residues 280 to 316; the sequence is PSRGRGVPVRGRGAAPPPPPVPRGRGVGPPRGALVRG. Omega-N-methylarginine occurs at positions 282, 284, and 291. Arg-304 is subject to Asymmetric dimethylarginine; by PRMT1. Residues 307–316 show a composition bias toward low complexity; it reads GPPRGALVRG. 4 positions are modified to omega-N-methylarginine; by PRMT1: Arg-310, Arg-315, Arg-320, and Arg-325. Arg-320 is subject to Dimethylated arginine; in A2780 ovarian carcinoma cell line. The disordered stretch occupies residues 327–346; sequence ATVTRGVPPPPTVRGAPAPR. Arg-331 and Arg-340 each carry dimethylated arginine; in A2780 ovarian carcinoma cell line. Asymmetric dimethylarginine; alternate is present on Arg-331. Arg-331 is modified (omega-N-methylarginine; by PRMT1; alternate). Omega-N-methylarginine; by PRMT1 is present on Arg-340. The interaction with HNRNPA1 stretch occupies residues 351–443; the sequence is GIQRIPLPPP…AYREHPYGRY (93 aa). Tyr-387 is modified (phosphotyrosine). The residue at position 390 (Ser-390) is a Phosphoserine. The interval 400 to 420 is interaction with ZBTB7A; it reads GHGEVQDSYEAYGQDDWNGTR. The disordered stretch occupies residues 411-443; that stretch reads YGQDDWNGTRPSLKAPPARPVKGAYREHPYGRY. Lys-432 participates in a covalent cross-link: Glycyl lysine isopeptide (Lys-Gly) (interchain with G-Cter in SUMO2). The segment covering 434–443 has biased composition (basic and acidic residues); it reads AYREHPYGRY. Tyr-435, Tyr-440, and Tyr-443 each carry phosphotyrosine; by PTK6.

This sequence belongs to the KHDRBS family. As to quaternary structure, self-associates to form homooligomers when bound to RNA, oligomerization appears to be limited when binding to proteins; dimerization increases RNA affinity. Forms a trimeric complex in the nucleus consisting of BANP, HDAC6 and KHDRBS1/SAM68; HDAC6 keeps KHDRBS1 in a deacetylated state which inhibits the inclusion of CD44 alternate exons. The complex is disrupted by MAPK1/MAPK3-mediated phosphorylation of BANP which results in BANP export to the cytoplasm. This facilitates acetylation of KHDRBS1 and CD44 variant exon inclusion. Interacts with KHDRBS3/SLIM-2. Interacts with KHDRBS2/SLIM-1; heterooligomer formation of KHDRBS family proteins may modulate RNA substrate specificity. Interacts with RASA1, LCK, FYN, PTPN6, PLCG1, GRB2, CBL, JAK3, PIK3R, STAT3, APC, HNRNPA1. Interacts with PTK6 (via SH3 and SH2 domains). Forms a complex with ILF2, ILF3, YLPM1, RBMX, NCOA5 and PPP1CA. Does not interact with TPR. Interacts with PRMT1. Binds WBP4/FBP21 (via WW domains), FNBP4/FBP30 (via WW domains). Interacts (via Arg/Gly-rich-flanked Pro-rich regions) with FYN (via the SH3 domain). Interacts with the non-receptor tyrosine kinase SRMS; the interaction leads to phosphorylation of KHDRBS1. Interacts with ZBTB7A; negatively regulates KHDRBS1 splicing activity toward BCL2L1. Tyrosine phosphorylated by several non-receptor tyrosine kinases including LCK, FYN and JAK3. Also tyrosine phosphorylated by the non-receptor tyrosine kinase SRMS in an EGF-dependent manner. Negatively correlates with ability to bind RNA but required for many interactions with proteins. Phosphorylation by PTK6 negatively regulates its RNA binding ability. Phosphorylation by PTK6 at Tyr-440 dictates the nuclear localization of KHDRBS1. Phosphorylation at Tyr-387 disrupts interaction with APC. Phosphorylation at tyrosine residues by FYN inverts activity on modulation of BCL2L1 alternative splicing. Post-translationally, acetylated. Positively correlates with ability to bind RNA. Deacetylated by HDAC6; this regulates alternative splicing by inhibiting the inclusion of CD44 alternate exons. In terms of processing, arginine methylation is required for nuclear localization. Also can affect interaction with other proteins. Inhibits interaction with Src-like SH3 domains, but not interaction with WW domains of WBP4/FBP21 and FNBP4/FBP30. Ubiquitously expressed in all tissue examined. Isoform 1 is expressed at lower levels in brain, skeletal muscle, and liver whereas isoform 3 is intensified in skeletal muscle and in liver.

It is found in the nucleus. The protein resides in the cytoplasm. Its subcellular location is the membrane. In terms of biological role, recruited and tyrosine phosphorylated by several receptor systems, for example the T-cell, leptin and insulin receptors. Once phosphorylated, functions as an adapter protein in signal transduction cascades by binding to SH2 and SH3 domain-containing proteins. Role in G2-M progression in the cell cycle. Represses CBP-dependent transcriptional activation apparently by competing with other nuclear factors for binding to CBP. Also acts as a putative regulator of mRNA stability and/or translation rates and mediates mRNA nuclear export. Positively regulates the association of constitutive transport element (CTE)-containing mRNA with large polyribosomes and translation initiation. According to some authors, is not involved in the nucleocytoplasmic export of unspliced (CTE)-containing RNA species according to. RNA-binding protein that plays a role in the regulation of alternative splicing and influences mRNA splice site selection and exon inclusion. Binds to RNA containing 5'-[AU]UAA-3' as a bipartite motif spaced by more than 15 nucleotides. Binds poly(A). Can regulate CD44 alternative splicing in a Ras pathway-dependent manner. In cooperation with HNRNPA1 modulates alternative splicing of BCL2L1 by promoting splicing toward isoform Bcl-X(S), and of SMN1. Can regulate alternative splicing of NRXN1 and NRXN3 in the laminin G-like domain 6 containing the evolutionary conserved neurexin alternative spliced segment 4 (AS4) involved in neurexin selective targeting to postsynaptic partners. In a neuronal activity-dependent manner cooperates synergistically with KHDRBS2/SLIM-1 in regulation of NRXN1 exon skipping at AS4. The cooperation with KHDRBS2/SLIM-1 is antagonistic for regulation of NXRN3 alternative splicing at AS4. Functionally, isoform 3, which is expressed in growth-arrested cells only, inhibits S phase. This is KH domain-containing, RNA-binding, signal transduction-associated protein 1 from Homo sapiens (Human).